The following is a 286-amino-acid chain: uncharacterized protein (286 aa).

NAD(+) is bound by residues 4-18 (AVIG…IARN) and T95. K171 is an active-site residue. K239 lines the NAD(+) pocket.

This sequence belongs to the HIBADH-related family.

This is an uncharacterized protein from Bacillus subtilis (strain 168).